The chain runs to 64 residues: Conotoxin VnMRCL-04 (64 aa).

The first 22 residues, 1-22 (MRCLPVFVILLLLIASAPSVDA), serve as a signal peptide directing secretion. A propeptide spanning residues 23-48 (RPKTKDDVPLASFHGNAERTLLNILR) is cleaved from the precursor. Tryptophan 63 is modified (tryptophan amide).

This sequence belongs to the conotoxin T superfamily. Post-translationally, contains 2 disulfide bonds that can be either 'C1-C3, C2-C4' or 'C1-C4, C2-C3', since these disulfide connectivities have been observed for conotoxins with cysteine framework V (for examples, see AC P0DQQ7 and AC P81755). Expressed by the venom duct.

Its subcellular location is the secreted. This Conus ventricosus (Mediterranean cone) protein is Conotoxin VnMRCL-04.